A 518-amino-acid chain; its full sequence is OTU domain-containing protein 5 (518 aa).

Disordered stretches follow at residues 1-79 and 105-144; these read MTIL…SGGA and PGHS…ETAA. A compositionally biased stretch (pro residues) spans 39-53; it reads SSPPPRWAYPGNPAP. A compositionally biased stretch (low complexity) spans 116-125; the sequence is SAGPGAPGSS. An OTU domain is found at 171-294; that stretch reads FIIKQMKEDG…NIHYNSVVNP (124 aa). Residues 176-182 are cys-loop; that stretch reads MKEDGAC. D179 is an active-site residue. C182 serves as the catalytic Nucleophile. A variable-loop region spans residues 231–241; that stretch reads KRKNNCHGNHI. The interval 282 to 287 is his-loop; the sequence is YHRNIH. Residue H287 is part of the active site. The tract at residues 371 to 450 is disordered; it reads ARQPRKASAT…GPSNQTCAGA (80 aa). A compositionally biased stretch (low complexity) spans 377-390; the sequence is ASATCSSATAAASS.

The protein belongs to the peptidase C85 family.

The enzyme catalyses Thiol-dependent hydrolysis of ester, thioester, amide, peptide and isopeptide bonds formed by the C-terminal Gly of ubiquitin (a 76-residue protein attached to proteins as an intracellular targeting signal).. Functionally, deubiquitinating enzyme that may function as negative regulator of the innate immune system. Has peptidase activity towards 'Lys-48'- and 'Lys-63'-linked polyubiquitin chains. Can also cleave 'Lys-11'-linked ubiquitin chains (in vitro). This Xenopus tropicalis (Western clawed frog) protein is OTU domain-containing protein 5 (otud5).